Here is a 454-residue protein sequence, read N- to C-terminus: T-box protein VegT (454 aa).

Residues Leu-57 to Glu-230 constitute a DNA-binding region (T-box). Positions Arg-229 to Leu-241 are enriched in basic and acidic residues. 2 disordered regions span residues Arg-229–Val-274 and Ala-295–Ser-358. The segment covering Gly-308–Lys-325 has biased composition (polar residues).

As to quaternary structure, forms a repression complex on the promoters of the nodal/nr1 and siamois genes with the maternal factors tcf7l1/tcf3 and pouf5.1/oct-25. Interacts (via C-terminus) with tcf7l1/tcf3 (via N-terminus). Also interacts with the other POU-domain transcription factors pou5f1.2/oct-91 and pou5f1.3/oct-60.

Its subcellular location is the nucleus. In terms of biological role, transcription factor required for both mesoderm and endoderm formation in the embryo; signaling determinants and concentration levels may determine which germ layer is formed. Acts together with beta-catenin to activate genes that are responsible for mesoderm induction including wnt-8, eomes t/bra, siamois, mix1 and sox17. Directly binds to promoter DNA. Patterns the mesoderm along the dorsoventral and posterior axis. Activates siamois gene transcription when alone or in combination with beta-catenin, but inhibits siamois transcription in combination with pou5f1.1/oct-25. The polypeptide is T-box protein VegT (Xenopus borealis (Kenyan clawed frog)).